Consider the following 130-residue polypeptide: Small ribosomal subunit protein uS8 (130 aa).

The protein belongs to the universal ribosomal protein uS8 family. As to quaternary structure, part of the 30S ribosomal subunit.

Its function is as follows. One of the primary rRNA binding proteins, it binds directly to 16S rRNA central domain where it helps coordinate assembly of the platform of the 30S subunit. The protein is Small ribosomal subunit protein uS8 of Pyrobaculum neutrophilum (strain DSM 2338 / JCM 9278 / NBRC 100436 / V24Sta) (Thermoproteus neutrophilus).